We begin with the raw amino-acid sequence, 126 residues long: Putative esterase ComA2 (126 aa).

Belongs to the thioesterase PaaI family.

In terms of biological role, is not required for competence. In Bacillus subtilis (strain 168), this protein is Putative esterase ComA2 (yuxO).